Here is a 183-residue protein sequence, read N- to C-terminus: SAGA-associated factor 11 homolog (183 aa).

Residues 98-119 form an SGF11-type zinc finger; that stretch reads CSCPNCNRIVAASRFAPHLEKC. The disordered stretch occupies residues 140–167; that stretch reads GGNYFGADEDDEDDADWSGEKRKKKIAP. Over residues 146–156 the composition is skewed to acidic residues; the sequence is ADEDDEDDADW.

This sequence belongs to the SGF11 family. Component of some SAGA transcription coactivator-HAT complexes. Within the SAGA complex, participates in a subcomplex of SAGA called the DUB module (deubiquitination module).

The protein resides in the nucleus. Component of the transcription regulatory histone acetylation (HAT) complex SAGA, a multiprotein complex that activates transcription by remodeling chromatin and mediating histone acetylation and deubiquitination. Within the SAGA complex, participates in a subcomplex that specifically deubiquitinates histone H2B. The SAGA complex is recruited to specific gene promoters by activators, where it is required for transcription. The chain is SAGA-associated factor 11 homolog from Culex quinquefasciatus (Southern house mosquito).